A 532-amino-acid polypeptide reads, in one-letter code: Zinc finger protein 350 (532 aa).

Residues 8–79 enclose the KRAB domain; the sequence is ITLEDVAVDF…EDGIHSGACS (72 aa). C2H2-type zinc fingers lie at residues 206 to 228, 234 to 256, 262 to 284, 290 to 312, 318 to 340, 346 to 368, 374 to 396, and 402 to 424; these read HVCS…QVMH, HRCS…QRTH, YECP…QKTH, YICS…QRIH, YICN…QRFH, FVCS…QRIH, FECS…QRTH, and YGCN…KRIH. The segment covering 427 to 443 has biased composition (basic and acidic residues); it reads EKQEAAKVENPPAERHS. A disordered region spans residues 427–465; that stretch reads EKQEAAKVENPPAERHSSLHTSDVMQEKNSANGATTQVP. Residues 445 to 465 show a composition bias toward polar residues; sequence LHTSDVMQEKNSANGATTQVP.

This sequence belongs to the krueppel C2H2-type zinc-finger protein family. In terms of assembly, interacts with BRCA1. Interacts with RNF11. In terms of tissue distribution, widely expressed.

It is found in the nucleus. The protein localises to the nucleus matrix. Its function is as follows. Transcriptional repressor. Binds to a specific sequence, 5'-GGGxxxCAGxxxTTT-3', within GADD45 intron 3. In Homo sapiens (Human), this protein is Zinc finger protein 350 (ZNF350).